The primary structure comprises 436 residues: MKGFMIAAPASGSGKTTVTLGLLRALKRRGEVLAPVKAGPDYIDPAYHRAASGVDCFNLDPWAMRPELISALSSRMTESGARVLVAEGMMGLFDGAIDGKGSSADLARLLDLPVVLVVDCARQSHSIAALVWGFSQFRKDVLIEGVILNRVGSPRHEAMLRGALAPLGVPVLGALPRDPALSLPERHLGLVQADEHAGLESFLEQAADVMEAHIDMDALQTIWLRPKRYDAMANVARLKPLGNRIAVARDDAFAFAYMHLFEGWRRRGAEISFFSPLADEAPKADADAIYLPGGYPELHAQRLAGAPRFRTAIGDAAARGVTAYGECGGYMVLGKTLEDAAGVHHPMLGLLPLETSFARRKLHLGYRLLEPLGGLPWDMPLKAHEFHYASIVREEKADRLFRVRDASGENLGEAGLRVGSVSGSFMHVIDFSGEAA.

The region spanning 244-435 (RIAVARDDAF…MHVIDFSGEA (192 aa)) is the GATase cobBQ-type domain. Cysteine 327 functions as the Nucleophile in the catalytic mechanism.

Belongs to the CobB/CbiA family. It depends on Mg(2+) as a cofactor.

The catalysed reaction is hydrogenobyrinate + 2 L-glutamine + 2 ATP + 2 H2O = hydrogenobyrinate a,c-diamide + 2 L-glutamate + 2 ADP + 2 phosphate + 2 H(+). It participates in cofactor biosynthesis; adenosylcobalamin biosynthesis; cob(II)yrinate a,c-diamide from precorrin-2 (aerobic route): step 9/10. Functionally, catalyzes the ATP-dependent amidation of the two carboxylate groups at positions a and c of hydrogenobyrinate, using either L-glutamine or ammonia as the nitrogen source. The chain is Hydrogenobyrinate a,c-diamide synthase from Brucella ovis (strain ATCC 25840 / 63/290 / NCTC 10512).